The following is a 125-amino-acid chain: Classical arabinogalactan protein 27 (125 aa).

Residues 1 to 21 form the signal peptide; the sequence is MASSILLTLITFIFLSSLSLS. Over residues 20 to 36 the composition is skewed to low complexity; sequence LSSPTTNTIPSSQTISP. The segment at 20 to 95 is disordered; that stretch reads LSSPTTNTIP…ASPPASSLAS (76 aa). The span at 53–66 shows a compositional bias: polar residues; that stretch reads AVSSTQTIPSSSTL. Residues 77 to 95 show a composition bias toward low complexity; the sequence is DPDPAFAPSASPPASSLAS. A lipid anchor (GPI-anchor amidated serine) is attached at S98. A propeptide spans 99–125 (removed in mature form); it reads QAPGVFIYFVFAAVYCFSLRLLAVSAI.

It belongs to the classical AGP family. In terms of processing, O-glycosylated on the hydroxyproline residues.

Its subcellular location is the cell membrane. Functionally, proteoglycan that seems to be implicated in diverse developmental roles such as differentiation, cell-cell recognition, embryogenesis and programmed cell death. The protein is Classical arabinogalactan protein 27 (AGP27) of Arabidopsis thaliana (Mouse-ear cress).